A 262-amino-acid polypeptide reads, in one-letter code: Versicolorin reductase 1 (262 aa).

The NADP(+) site is built by Ile-21, Asp-67, Asn-94, and Arg-127. Active-site proton donor residues include Ser-143 and Ser-144. Positions 158, 162, 191, and 193 each coordinate NADP(+). Tyr-158 acts as the Proton acceptor in catalysis. Lys-162 acts as the Lowers pKa of active site Tyr in catalysis.

The protein belongs to the short-chain dehydrogenases/reductases (SDR) family.

It localises to the cytoplasm. Its subcellular location is the cytosol. The enzyme catalyses (4S,8R)-2,13,16,20-tetrahydroxy-7,9-dioxapentacyclo[10.8.0.0(3,10).0(4,8).0(14,19)]icosa-1(12),2,5,10,13,16,19-heptaen-18-one + NADPH + H(+) = (4S,8R,16R)-2,13,16,20-tetrahydroxy-7,9-dioxapentacyclo[10.8.0.0(3,10).0(4,8).0(14,19)]icosa-1(12),2,5,10,13,19-hexaen-18-one + NADP(+). It participates in mycotoxin biosynthesis; aflatoxin biosynthesis. Functionally, cytochrome P450 monooxygenase; part of the gene cluster that mediates the biosynthesis of aflatoxins, a group of polyketide-derived furanocoumarins, and part of the most toxic and carcinogenic compounds among the known mycotoxins. The four major aflatoxins produced by A.parasiticus are aflatoxin B1 (AFB1), aflatoxin B2 (AFB2), aflatoxin G1 (AFG1) and aflatoxin G2 (AFG2). Within the aflatoxin pathway, with the cytochrome P450 monooxygenase aflN, the versicolorin reductase aflM, is involved in conversion of VERA to demethylsterigmatocystin (DMST). The biosynthesis of aflatoxins begins with the norsolorinic acid synthase aflC that combines a hexanoyl starter unit produced by the fatty acid synthase aflA/aflB and 7 malonyl-CoA extender units to synthesize the precursor NOR. The second step is the conversion of NOR to averantin and requires the norsolorinic acid ketoreductase aflD, which catalyzes the dehydration of norsolorinic acid to form (1'S)-averantin. The norsolorinic acid reductases aflE and aflF may also play a role in the conversion of NOR to AVN. The cytochrome P450 monooxygenase aflG then catalyzes the hydroxylation of AVN to 5'hydroxyaverantin (HAVN). The next step is performed by the 5'-hydroxyaverantin dehydrogenase aflH that transforms HAVN to 5'-oxoaverantin (OAVN) which is further converted to averufin (AVF) by aflK that plays a dual role in the pathway, as a 5'-oxoaverantin cyclase that mediates conversion of 5'-oxoaverantin, as well as a versicolorin B synthase in a later step in the pathway. The averufin oxidase aflI catalyzes the conversion of AVF to versiconal hemiacetal acetate (VHA). VHA is then the substrate for the versiconal hemiacetal acetate esterase aflJ to yield versiconal (VAL). Versicolorin B synthase aflK then converts VAL to versicolorin B (VERB) by closing the bisfuran ring of aflatoxin which is required for DNA-binding, thus giving to aflatoxin its activity as a mutagen. Then, the activity of the versicolorin B desaturase aflL leads to versicolorin A (VERA). A branch point starts from VERB since it can also be converted to dihydrodemethylsterigmatocystin (DMDHST), probably also by aflL, VERA being a precursor for aflatoxins B1 and G1, and DMDHST for aflatoxins B2 and G2. Next, the versicolorin reductase aflM and the cytochrome P450 monooxygenase aflN are involved in conversion of VERA to demethylsterigmatocystin (DMST). AflX and aflY seem also involved in this step, through probable aflX-mediated epoxide ring-opening step following versicolorin A oxidation and aflY-mediated Baeyer-Villiger oxidation required for the formation of the xanthone ring. The methyltransferase aflO then leads to the modification of DMST to sterigmatocystin (ST), and of DMDHST to dihydrosterigmatocystin (DHST). Both ST and DHST are then substrates of the O-methyltransferase aflP to yield O-methylsterigmatocystin (OMST) and dihydro-O-methylsterigmatocystin (DHOMST), respectively. Finally OMST is converted to aflatoxins B1 and G1, and DHOMST to aflatoxins B2 and G2, via the action of several enzymes including O-methylsterigmatocystin oxidoreductase aflQ, the cytochrome P450 monooxygenase aflU, but also the NADH-dependent flavin oxidoreductase nadA which is specifically required for the synthesis of AFG1. This chain is Versicolorin reductase 1, found in Aspergillus parasiticus (strain ATCC 56775 / NRRL 5862 / SRRC 143 / SU-1).